The sequence spans 202 residues: Small ribosomal subunit protein uS4c (202 aa).

Positions 90 to 153 (MRLDNIIFRL…KSQAIISKNI (64 aa)) constitute an S4 RNA-binding domain.

The protein belongs to the universal ribosomal protein uS4 family. As to quaternary structure, part of the 30S ribosomal subunit. Contacts protein S5. The interaction surface between S4 and S5 is involved in control of translational fidelity.

The protein localises to the plastid. Its subcellular location is the chloroplast. Its function is as follows. One of the primary rRNA binding proteins, it binds directly to 16S rRNA where it nucleates assembly of the body of the 30S subunit. In terms of biological role, with S5 and S12 plays an important role in translational accuracy. In Splachnum sphaericum (Pinkstink dung moss), this protein is Small ribosomal subunit protein uS4c (rps4).